The sequence spans 258 residues: Enterotoxin type G (258 aa).

Positions 1–25 (MKKLSTVIIILILEIVFHNMNYVNA) are cleaved as a signal peptide. Cys-116 and Cys-133 are joined by a disulfide.

It belongs to the staphylococcal/streptococcal toxin family.

The protein resides in the secreted. Its function is as follows. Staphylococcal enterotoxins cause the intoxication staphylococcal food poisoning syndrome. The illness is characterized by high fever, hypotension, diarrhea, shock, and in some cases death. The protein is Enterotoxin type G (entG) of Staphylococcus aureus (strain N315).